Reading from the N-terminus, the 82-residue chain is MNAIRYPFITEKAMMLMDENKLQFVVDTRANKTQVENDVVKMYGFTVKSVCTMTTMKGLKKALVTFNETDAAHEIATRIGLV.

It belongs to the universal ribosomal protein uL23 family. Part of the 50S ribosomal subunit. Contacts protein L29.

Binds to 23S rRNA. One of the proteins that surrounds the polypeptide exit tunnel on the outside of the ribosome. In Methanococcoides burtonii (strain DSM 6242 / NBRC 107633 / OCM 468 / ACE-M), this protein is Large ribosomal subunit protein uL23.